Here is a 263-residue protein sequence, read N- to C-terminus: Endonuclease 8 (263 aa).

Residue Pro-2 is the Schiff-base intermediate with DNA of the active site. Glu-3 serves as the catalytic Proton donor. Lys-53 (proton donor; for beta-elimination activity) is an active-site residue. Residues Gln-70, Arg-125, and Asn-169 each contribute to the DNA site. The FPG-type zinc-finger motif lies at 229-263; it reads KVFHRDGELCERCGGIIEKTTLSSRPFYWCPGCQH. Arg-253 acts as the Proton donor; for delta-elimination activity in catalysis.

This sequence belongs to the FPG family. Requires Zn(2+) as cofactor.

It catalyses the reaction 2'-deoxyribonucleotide-(2'-deoxyribose 5'-phosphate)-2'-deoxyribonucleotide-DNA = a 3'-end 2'-deoxyribonucleotide-(2,3-dehydro-2,3-deoxyribose 5'-phosphate)-DNA + a 5'-end 5'-phospho-2'-deoxyribonucleoside-DNA + H(+). Functionally, involved in base excision repair of DNA damaged by oxidation or by mutagenic agents. Acts as a DNA glycosylase that recognizes and removes damaged bases. Has a preference for oxidized pyrimidines, such as thymine glycol, 5,6-dihydrouracil and 5,6-dihydrothymine. Has AP (apurinic/apyrimidinic) lyase activity and introduces nicks in the DNA strand. Cleaves the DNA backbone by beta-delta elimination to generate a single-strand break at the site of the removed base with both 3'- and 5'-phosphates. This Escherichia coli O157:H7 protein is Endonuclease 8.